The sequence spans 1497 residues: DNA-directed RNA polymerase subunit beta' (1497 aa).

Residues Cys-67, Cys-69, Cys-82, and Cys-85 each coordinate Zn(2+). Mg(2+)-binding residues include Asp-499, Asp-501, and Asp-503. Residues Cys-867, Cys-943, Cys-950, and Cys-953 each contribute to the Zn(2+) site. The tract at residues 1476-1497 (ESNATERVVEEPATREGFANER) is disordered. The span at 1482 to 1497 (RVVEEPATREGFANER) shows a compositional bias: basic and acidic residues.

Belongs to the RNA polymerase beta' chain family. The RNAP catalytic core consists of 2 alpha, 1 beta, 1 beta' and 1 omega subunit. When a sigma factor is associated with the core the holoenzyme is formed, which can initiate transcription. Mg(2+) is required as a cofactor. Zn(2+) serves as cofactor.

It carries out the reaction RNA(n) + a ribonucleoside 5'-triphosphate = RNA(n+1) + diphosphate. In terms of biological role, DNA-dependent RNA polymerase catalyzes the transcription of DNA into RNA using the four ribonucleoside triphosphates as substrates. The polypeptide is DNA-directed RNA polymerase subunit beta' (Pelodictyon phaeoclathratiforme (strain DSM 5477 / BU-1)).